The sequence spans 493 residues: Probable cytochrome P450 313a2 (493 aa).

C438 contributes to the heme binding site.

Belongs to the cytochrome P450 family. The cofactor is heme.

The protein resides in the endoplasmic reticulum membrane. Its subcellular location is the microsome membrane. Its function is as follows. May be involved in the metabolism of insect hormones and in the breakdown of synthetic insecticides. This is Probable cytochrome P450 313a2 (Cyp313a2) from Drosophila melanogaster (Fruit fly).